Reading from the N-terminus, the 231-residue chain is Deoxyribose-phosphate aldolase (231 aa).

Asp86 functions as the Proton donor/acceptor in the catalytic mechanism. Lys147 (schiff-base intermediate with acetaldehyde) is an active-site residue. Residue Lys172 is the Proton donor/acceptor of the active site. A disordered region spans residues 206–231 (WQAETAGETVTEPESDRDGADTTDGY).

It belongs to the DeoC/FbaB aldolase family. DeoC type 1 subfamily.

Its subcellular location is the cytoplasm. The enzyme catalyses 2-deoxy-D-ribose 5-phosphate = D-glyceraldehyde 3-phosphate + acetaldehyde. Its pathway is carbohydrate degradation; 2-deoxy-D-ribose 1-phosphate degradation; D-glyceraldehyde 3-phosphate and acetaldehyde from 2-deoxy-alpha-D-ribose 1-phosphate: step 2/2. Catalyzes a reversible aldol reaction between acetaldehyde and D-glyceraldehyde 3-phosphate to generate 2-deoxy-D-ribose 5-phosphate. This chain is Deoxyribose-phosphate aldolase, found in Haloarcula marismortui (strain ATCC 43049 / DSM 3752 / JCM 8966 / VKM B-1809) (Halobacterium marismortui).